A 702-amino-acid polypeptide reads, in one-letter code: Polyribonucleotide nucleotidyltransferase (702 aa).

The Mg(2+) site is built by D493 and D499. A KH domain is found at 560–619; sequence PRLLTMRIDPERIRDVIGKGGATIRGLTEETGTNIDISDEGVVTIASADKAAAEEAKKRI. In terms of domain architecture, S1 motif spans 629–697; sequence GKVYDGKVAK…RQGRIRLSMK (69 aa).

Belongs to the polyribonucleotide nucleotidyltransferase family. In terms of assembly, component of the RNA degradosome, which is a multiprotein complex involved in RNA processing and mRNA degradation. The cofactor is Mg(2+).

It localises to the cytoplasm. The catalysed reaction is RNA(n+1) + phosphate = RNA(n) + a ribonucleoside 5'-diphosphate. Involved in mRNA degradation. Catalyzes the phosphorolysis of single-stranded polyribonucleotides processively in the 3'- to 5'-direction. The polypeptide is Polyribonucleotide nucleotidyltransferase (Halorhodospira halophila (strain DSM 244 / SL1) (Ectothiorhodospira halophila (strain DSM 244 / SL1))).